A 230-amino-acid polypeptide reads, in one-letter code: Ribonuclease 3 (230 aa).

An RNase III domain is found at Met1–Gly134. Glu47 contacts Mg(2+). Asp51 is an active-site residue. Mg(2+) contacts are provided by Asp120 and Glu123. Glu123 is an active-site residue. Residues Asp160 to Glu229 enclose the DRBM domain.

The protein belongs to the ribonuclease III family. Homodimer. Mg(2+) serves as cofactor.

The protein localises to the cytoplasm. It carries out the reaction Endonucleolytic cleavage to 5'-phosphomonoester.. Digests double-stranded RNA. Involved in the processing of primary rRNA transcript to yield the immediate precursors to the large and small rRNAs (23S and 16S). Processes some mRNAs, and tRNAs when they are encoded in the rRNA operon. Processes pre-crRNA and tracrRNA of type II CRISPR loci if present in the organism. In Streptococcus pyogenes serotype M49 (strain NZ131), this protein is Ribonuclease 3.